Consider the following 60-residue polypeptide: ATP synthase subunit J, mitochondrial (60 aa).

The helical transmembrane segment at 13–32 threads the bilayer; sequence ILKPMLPFFLGGAIVFYGTV.

Belongs to the ATPase j subunit family. In terms of assembly, F-type ATPases have 2 components, CF(1) - the catalytic core - and CF(0) - the membrane proton channel. In yeast, the dimeric form of ATP synthase consists of 17 polypeptides: alpha, beta, gamma, delta, epsilon, 4 (B), 5 (OSCP), 6 (A), 8, 9 (C), d, E (Tim11), f, g, h, i/j and k.

The protein resides in the mitochondrion membrane. Its function is as follows. Mitochondrial membrane ATP synthase (F(1)F(0) ATP synthase or Complex V) produces ATP from ADP in the presence of a proton gradient across the membrane which is generated by electron transport complexes of the respiratory chain. F-type ATPases consist of two structural domains, F(1) - containing the extramembraneous catalytic core and F(0) - containing the membrane proton channel, linked together by a central stalk and a peripheral stalk. During catalysis, ATP synthesis in the catalytic domain of F(1) is coupled via a rotary mechanism of the central stalk subunits to proton translocation. Part of the complex F(0) domain. Minor subunit located with subunit a in the membrane. The protein is ATP synthase subunit J, mitochondrial (atp18) of Schizosaccharomyces pombe (strain 972 / ATCC 24843) (Fission yeast).